The sequence spans 95 residues: Protein TusB (95 aa).

Belongs to the DsrH/TusB family. As to quaternary structure, heterohexamer, formed by a dimer of trimers. The hexameric TusBCD complex contains 2 copies each of TusB, TusC and TusD. The TusBCD complex interacts with TusE.

Its subcellular location is the cytoplasm. Functionally, part of a sulfur-relay system required for 2-thiolation of 5-methylaminomethyl-2-thiouridine (mnm(5)s(2)U) at tRNA wobble positions. The chain is Protein TusB from Escherichia coli (strain ATCC 8739 / DSM 1576 / NBRC 3972 / NCIMB 8545 / WDCM 00012 / Crooks).